A 402-amino-acid polypeptide reads, in one-letter code: uncharacterized protein (402 aa).

Over 1 to 12 (MFQQLSASIRHN) the chain is Cytoplasmic. The chain crosses the membrane as a helical span at residues 13–33 (AHIIFLCISWYFISSLASQVT). At 34-50 (KQVLTVCPLPLFLGEFQ) the chain is on the extracellular side. Residues 51–71 (FIYTAVLAWFTCYIAYSFPGF) form a helical membrane-spanning segment. Over 72-103 (YRIFPNGTFPEYYIDDRETSRAARKESKLSSL) the chain is Cytoplasmic. A helical transmembrane segment spans residues 104-124 (IIPPSKPILQTVLPLGLFQFV). Over 125-134 (GKYFGHTATS) the chain is Extracellular. A helical membrane pass occupies residues 135-155 (LVPVSTVASIKTLSPMFILLL). At 156–165 (QKILKISTLK) the chain is on the cytoplasmic side. The chain crosses the membrane as a helical span at residues 166 to 186 (ITLTLIFSLCTLVLGVWIIVQ). Residues 187–206 (EDNRSPASSNELREFSKYGV) are Extracellular-facing. A helical transmembrane segment spans residues 207–227 (ICAMISMFIFVLQNIYGKTVF). Residues 228–271 (TYRSQTDESQSNSGFSRQESPLPLYEKLDEKLVAKKKPKSYDKL) are Cytoplasmic-facing. A helical membrane pass occupies residues 272–292 (TLMIYISLVGFCLSFGWFITL). The Extracellular portion of the chain corresponds to 293–353 (EFPVLFRYFF…TYSIANLMKR (61 aa)). The helical transmembrane segment at 354 to 374 (FAIIAVSWVFIGRRITWLQVF) threads the bilayer. Residues 375–402 (GLVLNTLGLFLYERCTSQSKIKAKIRPE) lie on the Cytoplasmic side of the membrane.

It belongs to the TPT transporter family.

Its subcellular location is the membrane. This is an uncharacterized protein from Saccharomyces cerevisiae (strain ATCC 204508 / S288c) (Baker's yeast).